The sequence spans 322 residues: MVKKVNNPLKIDYQNGIIENRLLQIRNFKDVNTPKLINVWSIRIDPRDSKKVIELIRNDFQKNDPVSLRHLKRIRKDIETSTLEVVLCSKEYICDEGEINNKLKSIWVGTKKYELSDDIEVPEFAPSTKELNNAWSVKYWPLIWNGNPNDQILNDYKIDMQEVRNELSRASTLSVKMATAGKQFPMVSVFVDPSRKKDKVVAEDGRNCENSLPIDHSVMVGIRAVGERLREGVDEDANSYLCLDYDVYLTHEPCSMCSMALIHSRVRRVVFLTEMQRTGSLKLTSGDGYCMNDNKQLNSTYEAFQWIGEEYPVGQVDRDVCC.

The CMP/dCMP-type deaminase domain occupies 162-283 (EVRNELSRAS…EMQRTGSLKL (122 aa)). Zn(2+) contacts are provided by H216, C254, C257, and C322.

The protein belongs to the cytidine and deoxycytidylate deaminase family. ADAT3 subfamily. In terms of assembly, heterodimer with TAD2.

The protein resides in the cytoplasm. Its subcellular location is the nucleus. It localises to the peroxisome. Its function is as follows. Structural subunit of tRNA-specific adenosine deaminase, which deaminates adenosine-34 (the first, also called wobble position of the anticodon) to inosine in many tRNAs. Inosine-34 allows the decoding of 3 different nucleotides at the third position of mRNA codons, as inosine is able to pair with U, C, and A. This is tRNA-specific adenosine deaminase subunit TAD3 (TAD3) from Saccharomyces cerevisiae (strain ATCC 204508 / S288c) (Baker's yeast).